The following is a 1848-amino-acid chain: WD repeat-containing protein 90 (1848 aa).

The segment at 1–222 is binds with microtubules; the sequence is MAGVWQHPFV…ISPMPREMSF (222 aa). 2 disordered regions span residues 257-278 and 316-336; these read MVTA…RSVT and SVSA…GVEQ. The segment covering 320-335 has biased composition (basic and acidic residues); sequence RAEEARDLEDRSRGVE. WD repeat units follow at residues 436–479, 481–523, 530–570, 644–683, 685–724, 727–766, 769–808, 811–850, 955–993, and 998–1035; these read GHTD…AMFK, HVHS…RSGE, AHTD…LRSC, SSGP…VFLE, EHEG…YNTL, SHTD…QLYD, AEEE…LQAE, QHRG…QHVL, VHKQ…TVRP, and GHSE…DPEF. Disordered regions lie at residues 1053 to 1133 and 1151 to 1178; these read ALDP…VESD and LTGS…PDSY. Residues 1102–1113 are compositionally biased toward acidic residues; the sequence is SESDDGQEEEGN. Basic and acidic residues-rich tracts occupy residues 1114–1129 and 1164–1178; these read RDEQ…RDNL and GMVK…PDSY. WD repeat units lie at residues 1252–1297, 1300–1341, 1343–1382, 1395–1433, 1435–1473, 1532–1571, 1574–1621, 1624–1663, 1670–1714, 1774–1813, and 1815–1848; these read GHPE…CMKI, HHRT…LLAT, RLFQ…TDTQ, GTAA…CFLT, EADQ…ELRE, GHRN…LLLQ, VLNQ…MEMK, PHPC…TIRV, SPIT…DKCE, PLSH…KQDF, and AYDD…IQNS.

The protein belongs to the WD repeat WDR90/POC16 family.

The protein localises to the cytoplasm. Its subcellular location is the cytoskeleton. The protein resides in the microtubule organizing center. It localises to the centrosome. It is found in the centriole. The protein localises to the centriolar satellite. Functionally, microtubule-binding protein that plays a crucial role in ensuring inner core protein localization within the centriole core, as well as in maintaining the microtubule wall integrity and the overall centriole roundness and stability. Required for efficient primary cilium formation. The chain is WD repeat-containing protein 90 (wdr90) from Xenopus tropicalis (Western clawed frog).